Reading from the N-terminus, the 126-residue chain is Large ribosomal subunit protein bL19 (126 aa).

Belongs to the bacterial ribosomal protein bL19 family.

This protein is located at the 30S-50S ribosomal subunit interface and may play a role in the structure and function of the aminoacyl-tRNA binding site. The polypeptide is Large ribosomal subunit protein bL19 (Bradyrhizobium diazoefficiens (strain JCM 10833 / BCRC 13528 / IAM 13628 / NBRC 14792 / USDA 110)).